We begin with the raw amino-acid sequence, 206 residues long: dITP/XTP pyrophosphatase (206 aa).

A substrate-binding site is contributed by 7-12; that stretch reads SCHGYK. The active-site Proton acceptor is the aspartate 70. Aspartate 70 is a binding site for Mg(2+). Substrate-binding positions include threonine 71, 154-157, lysine 177, and 182-183; these read FGYD and HR.

It belongs to the HAM1 NTPase family. As to quaternary structure, homodimer. Mg(2+) serves as cofactor.

It carries out the reaction XTP + H2O = XMP + diphosphate + H(+). The enzyme catalyses dITP + H2O = dIMP + diphosphate + H(+). It catalyses the reaction ITP + H2O = IMP + diphosphate + H(+). Its function is as follows. Pyrophosphatase that catalyzes the hydrolysis of nucleoside triphosphates to their monophosphate derivatives, with a high preference for the non-canonical purine nucleotides XTP (xanthosine triphosphate), dITP (deoxyinosine triphosphate) and ITP. Seems to function as a house-cleaning enzyme that removes non-canonical purine nucleotides from the nucleotide pool, thus preventing their incorporation into DNA/RNA and avoiding chromosomal lesions. This chain is dITP/XTP pyrophosphatase, found in Chlamydia caviae (strain ATCC VR-813 / DSM 19441 / 03DC25 / GPIC) (Chlamydophila caviae).